The chain runs to 159 residues: Ribosomal RNA large subunit methyltransferase H (159 aa).

Residues Leu-76, Gly-108, and 127–132 contribute to the S-adenosyl-L-methionine site; that span reads FGRLTL.

It belongs to the RNA methyltransferase RlmH family. In terms of assembly, homodimer.

The protein localises to the cytoplasm. The enzyme catalyses pseudouridine(1915) in 23S rRNA + S-adenosyl-L-methionine = N(3)-methylpseudouridine(1915) in 23S rRNA + S-adenosyl-L-homocysteine + H(+). Functionally, specifically methylates the pseudouridine at position 1915 (m3Psi1915) in 23S rRNA. This is Ribosomal RNA large subunit methyltransferase H from Listeria monocytogenes serovar 1/2a (strain ATCC BAA-679 / EGD-e).